Reading from the N-terminus, the 142-residue chain is Hemoglobin subunit alpha (142 aa).

Positions 2–142 constitute a Globin domain; it reads VLSAADKTNV…VSTVLTSKYR (141 aa). At Ser4 the chain carries Phosphoserine. An N6-succinyllysine modification is found at Lys8. A Phosphothreonine modification is found at Thr9. An N6-succinyllysine modification is found at Lys12. Residue Lys17 is modified to N6-acetyllysine; alternate. The residue at position 17 (Lys17) is an N6-succinyllysine; alternate. Tyr25 is subject to Phosphotyrosine. The residue at position 41 (Lys41) is an N6-succinyllysine. Ser50 carries the post-translational modification Phosphoserine. His59 contacts O2. Residue His88 participates in heme b binding. A Phosphoserine modification is found at Ser103. Position 109 is a phosphothreonine (Thr109). Phosphoserine is present on residues Ser125 and Ser132. Thr135 and Thr138 each carry phosphothreonine. Residue Ser139 is modified to Phosphoserine.

It belongs to the globin family. As to quaternary structure, heterotetramer of two alpha chains and two beta chains. As to expression, red blood cells.

Functionally, involved in oxygen transport from the lung to the various peripheral tissues. In terms of biological role, hemopressin acts as an antagonist peptide of the cannabinoid receptor CNR1. Hemopressin-binding efficiently blocks cannabinoid receptor CNR1 and subsequent signaling. The polypeptide is Hemoglobin subunit alpha (HBA) (Equus caballus (Horse)).